We begin with the raw amino-acid sequence, 851 residues long: Leucine--tRNA ligase (851 aa).

The 'HIGH' region motif lies at 51 to 61; it reads PYPSGDLHMGH. The 'KMSKS' region motif lies at 615 to 619; the sequence is KMSKS. Lys-618 contacts ATP.

It belongs to the class-I aminoacyl-tRNA synthetase family.

Its subcellular location is the cytoplasm. The enzyme catalyses tRNA(Leu) + L-leucine + ATP = L-leucyl-tRNA(Leu) + AMP + diphosphate. This is Leucine--tRNA ligase from Clavibacter michiganensis subsp. michiganensis (strain NCPPB 382).